Here is a 122-residue protein sequence, read N- to C-terminus: Large ribosomal subunit protein uL14 (122 aa).

It belongs to the universal ribosomal protein uL14 family. As to quaternary structure, part of the 50S ribosomal subunit. Forms a cluster with proteins L3 and L19. In the 70S ribosome, L14 and L19 interact and together make contacts with the 16S rRNA in bridges B5 and B8.

Binds to 23S rRNA. Forms part of two intersubunit bridges in the 70S ribosome. This Helicobacter acinonychis (strain Sheeba) protein is Large ribosomal subunit protein uL14.